Consider the following 375-residue polypeptide: G-protein coupled estrogen receptor 1 (375 aa).

Residue Met1 is modified to N-acetylmethionine. Residues Met1–Ser62 lie on the Extracellular side of the membrane. N-linked (GlcNAc...) asparagine glycosylation is found at Asn32 and Asn44. The chain crosses the membrane as a helical span at residues Cys63–Asn84. Residues Ile85–Leu96 are Cytoplasmic-facing. Residues Tyr97–Asp120 form a helical membrane-spanning segment. The Extracellular portion of the chain corresponds to Glu121 to Phe132. A disulfide bridge links Cys130 with Cys207. Residues Met133 to Phe153 form a helical membrane-spanning segment. Over Asp154 to Arg175 the chain is Cytoplasmic. A helical transmembrane segment spans residues Leu176–Thr194. At Ala195–Thr220 the chain is on the extracellular side. Residues Leu221 to Leu236 traverse the membrane as a helical segment. Residues Ile237–Arg259 are Cytoplasmic-facing. The chain crosses the membrane as a helical span at residues Met260–Ser280. At Val281–Gly306 the chain is on the extracellular side. The chain crosses the membrane as a helical span at residues His307 to Leu327. The Cytoplasmic portion of the chain corresponds to Gly328–Val375.

Belongs to the G-protein coupled receptor 1 family. In terms of assembly, homodimer. Heterodimer; heterodimerizes with other G-protein-coupled receptor (GPCRs) like CRHR1, HTR1A and PAQR8. Interacts with RAMP3; the interaction confers proper subcellular localization and function in cardioprotection. Interacts with KRT7 and KRT8. Interacts with EGFR; the interaction increases after agonist-induced stimulation in cancer-associated fibroblasts (CAF). Interacts with EGFR and ESR1. Interacts (via C-terminus tail motif) with DLG4 (via N-terminus tandem pair of PDZ domains); the interaction is direct and induces the increase of GPER1 protein levels residing at the plasma membrane surface in a estradiol-independent manner. Post-translationally, ubiquitinated; ubiquitination occurs at the plasma membrane and leads to proteasome-mediated degradation. In terms of processing, glycosylated. In terms of tissue distribution, expressed in the brain. Expressed in neurons of the hippocampus, hypothalamic paraventricular nucleus (PVN), supraoptic nucleus (SON) and the median eminence. Expressed in magnocellular neurosecretory cells (MNCs) which secrete oxytocin but not in MNCs which secrete vasopressin. Expressed in glial cells. Expressed in the nucleus ambiguous. Expressed in epithelial cells, in pachytene spermatocytes (PS) (at protein level). Expressed strongly in vascular endothelial cells and poorly in vascular smooth muscle cells (VSMC). Expressed in the brain, lung, pituitary gland, adrenal medulla, renal pelvis and ovary. Expressed in CA1 hippocampus. Expressed weakly in heart, skeletal muscle and kidney.

It is found in the nucleus. Its subcellular location is the cytoplasm. The protein localises to the perinuclear region. The protein resides in the cytoskeleton. It localises to the cytoplasmic vesicle membrane. It is found in the cell membrane. Its subcellular location is the basolateral cell membrane. The protein localises to the endoplasmic reticulum membrane. The protein resides in the early endosome. It localises to the recycling endosome. It is found in the golgi apparatus. Its subcellular location is the trans-Golgi network. The protein localises to the golgi apparatus membrane. The protein resides in the cell projection. It localises to the dendrite. It is found in the dendritic spine membrane. Its subcellular location is the axon. The protein localises to the postsynaptic density. The protein resides in the mitochondrion membrane. Functionally, G-protein coupled estrogen receptor that binds to 17-beta-estradiol (E2) with high affinity, leading to rapid and transient activation of numerous intracellular signaling pathways. Stimulates cAMP production, calcium mobilization and tyrosine kinase Src inducing the release of heparin-bound epidermal growth factor (HB-EGF) and subsequent transactivation of the epidermal growth factor receptor (EGFR), activating downstream signaling pathways such as PI3K/Akt and ERK/MAPK. Mediates pleiotropic functions among others in the cardiovascular, endocrine, reproductive, immune and central nervous systems. Has a role in cardioprotection by reducing cardiac hypertrophy and perivascular fibrosis in a RAMP3-dependent manner. Regulates arterial blood pressure by stimulating vasodilation and reducing vascular smooth muscle and microvascular endothelial cell proliferation. Plays a role in blood glucose homeostasis contributing to the insulin secretion response by pancreatic beta cells. Triggers mitochondrial apoptosis during pachytene spermatocyte differentiation. Stimulates uterine epithelial cell proliferation. Enhances uterine contractility in response to oxytocin. Contributes to thymic atrophy by inducing apoptosis. Attenuates TNF-mediated endothelial expression of leukocyte adhesion molecules. Promotes neuritogenesis in developing hippocampal neurons. Plays a role in acute neuroprotection against NMDA-induced excitotoxic neuronal death. Increases firing activity and intracellular calcium oscillations in luteinizing hormone-releasing hormone (LHRH) neurons. Inhibits early osteoblast proliferation at growth plate during skeletal development. Inhibits mature adipocyte differentiation and lipid accumulation. Involved in the recruitment of beta-arrestin 2 ARRB2 at the plasma membrane in epithelial cells. Also functions as a receptor for aldosterone mediating rapid regulation of vascular contractibility through the PI3K/ERK signaling pathway. Involved in cancer progression regulation. Stimulates cancer-associated fibroblast (CAF) proliferation by a rapid genomic response through the EGFR/ERK transduction pathway. Associated with EGFR, may act as a transcription factor activating growth regulatory genes (c-fos, cyclin D1). Promotes integrin alpha-5/beta-1 and fibronectin (FN) matrix assembly in breast cancer cells. This chain is G-protein coupled estrogen receptor 1 (Gper1), found in Rattus norvegicus (Rat).